A 335-amino-acid chain; its full sequence is Dye-decolorizing peroxidase (335 aa).

Asp149 functions as the Proton acceptor in the catalytic mechanism. Residue His222 coordinates heme. The interval 312 to 335 (LPQAATPTLAAGSLSIGSLKGSPR) is targeting peptide.

This sequence belongs to the DyP-type peroxidase family. In terms of assembly, homotetramer, presumably also in the encapsulin nanocompartment. It depends on heme b as a cofactor.

It localises to the encapsulin nanocompartment. The enzyme catalyses 2 a phenolic donor + H2O2 = 2 a phenolic radical donor + 2 H2O. Functionally, cargo of a type 1 encapsulin nanocompartment in situ; this cargo protects against oxidative stress at low pH. When expressed in the cytoplasm (absence of the encapsulin shell gene) it is almost as protective as the intact nanocompartment; its encapsulation has a modest yet significant effect on protection against oxidative stress at low pH. A heme-dependent peroxidase, it probably does not have deferrochelatase activity. Converts guaiacol and H2O2 to tetraguaiacol, also acts on 2,2'-azino-bis(3-ethylbenzothiazoline-6-sulfonic acid) (ABTS). Retains peroxidase activity when encapsulated but has a reduced set of substrates; acts on ABTS but not guaiacol. This chain is Dye-decolorizing peroxidase, found in Mycobacterium tuberculosis (strain ATCC 25618 / H37Rv).